The following is a 266-amino-acid chain: ATP synthase subunit a (266 aa).

Transmembrane regions (helical) follow at residues 38–58 (KQMLLVILSVVIIATFFLLAA), 99–119 (LLFSLFFFILVNNIYGAIPLI), 126–146 (HVGGAYVLAAIVYLTWIAIGV), 162–182 (GVPVYILPIVIPIEIISNFLV), 191–211 (LFATMLAGHLIVMIAGSGIEY), and 224–244 (SVLVLVGAIAMYMLEALIMAL).

The protein belongs to the ATPase A chain family. As to quaternary structure, F-type ATPases have 2 components, CF(1) - the catalytic core - and CF(0) - the membrane proton channel. CF(1) has five subunits: alpha(3), beta(3), gamma(1), delta(1), epsilon(1). CF(0) has three main subunits: a(1), b(2) and c(9-12). The alpha and beta chains form an alternating ring which encloses part of the gamma chain. CF(1) is attached to CF(0) by a central stalk formed by the gamma and epsilon chains, while a peripheral stalk is formed by the delta and b chains.

It localises to the cell membrane. Key component of the proton channel; it plays a direct role in the translocation of protons across the membrane. The chain is ATP synthase subunit a from Arthrobacter sp. (strain FB24).